Consider the following 186-residue polypeptide: Pyridoxal 5'-phosphate synthase subunit PdxT (186 aa).

46 to 48 (GES) lines the L-glutamine pocket. C78 acts as the Nucleophile in catalysis. Residues R105 and 134–135 (IR) contribute to the L-glutamine site. Active-site charge relay system residues include H170 and E172.

It belongs to the glutaminase PdxT/SNO family. In the presence of PdxS, forms a dodecamer of heterodimers. Only shows activity in the heterodimer.

The catalysed reaction is aldehydo-D-ribose 5-phosphate + D-glyceraldehyde 3-phosphate + L-glutamine = pyridoxal 5'-phosphate + L-glutamate + phosphate + 3 H2O + H(+). The enzyme catalyses L-glutamine + H2O = L-glutamate + NH4(+). It participates in cofactor biosynthesis; pyridoxal 5'-phosphate biosynthesis. Its function is as follows. Catalyzes the hydrolysis of glutamine to glutamate and ammonia as part of the biosynthesis of pyridoxal 5'-phosphate. The resulting ammonia molecule is channeled to the active site of PdxS. In Clostridium acetobutylicum (strain ATCC 824 / DSM 792 / JCM 1419 / IAM 19013 / LMG 5710 / NBRC 13948 / NRRL B-527 / VKM B-1787 / 2291 / W), this protein is Pyridoxal 5'-phosphate synthase subunit PdxT.